Here is a 411-residue protein sequence, read N- to C-terminus: Exodeoxyribonuclease 7 large subunit (411 aa).

This sequence belongs to the XseA family. In terms of assembly, heterooligomer composed of large and small subunits.

It is found in the cytoplasm. The enzyme catalyses Exonucleolytic cleavage in either 5'- to 3'- or 3'- to 5'-direction to yield nucleoside 5'-phosphates.. Its function is as follows. Bidirectionally degrades single-stranded DNA into large acid-insoluble oligonucleotides, which are then degraded further into small acid-soluble oligonucleotides. The protein is Exodeoxyribonuclease 7 large subunit of Mycobacterium sp. (strain KMS).